The following is a 116-amino-acid chain: M-zodatoxin-Lt6a/c (116 aa).

An N-terminal signal peptide occupies residues 1–22 (MKYFVVALTLAVAFVCIEECKT). 2 consecutive propeptides follow at residues 23–44 (VEIGYAVSEDFDQNEIDNDEAR) and 80–83 (EEAR). Short sequence motifs (processing quadruplet motif) lie at residues 41-44 (DEAR) and 80-83 (EEAR). At Q84 the chain carries Pyrrolidone carboxylic acid.

This sequence belongs to the cationic peptide 03 (latarcin) family. 06 subfamily. Post-translationally, cleavage of the propeptide depends on the processing quadruplet motif (XXXR, with at least one of X being E). Expressed by the venom gland.

It is found in the secreted. Its function is as follows. Does not have antimicrobial activity against Gram-positive bacteria (A.globiformis VKM Ac-1112 (MIC&gt;70 uM) and B.subtilis VKM B-501 (MIC&gt;70 uM)), Gram-negative bacteria (E.coli DH5-alpha (MIC&gt;70 uM), E.coli MH1 (MIC&gt;70 uM) and P.aeruginosa PAO1 (MIC&gt;70 uM)), yeast (P.pastoris GS115 (MIC&gt;70 uM) or S.cerevisiae Y190 (MIC&gt;70 uM)). Does not have hemolytic activity against rabbit erythrocytes. However, it causes some conductance changes in planar bilayer membranes, without membrane rupture, suggesting a cytolytic function on other biological targets. It causes paralysis, but is not lethal when injected into insect larvae. In Lachesana tarabaevi (Spider), this protein is M-zodatoxin-Lt6a/c.